The chain runs to 227 residues: Cytochrome c oxidase subunit 2 (227 aa).

Over 1–14 (MAHPVQLSLQDATS) the chain is Mitochondrial intermembrane. The chain crosses the membrane as a helical span at residues 15-45 (PVMEELITFHDHAFMAMSLISFLVLYALLST). The Mitochondrial matrix segment spans residues 46 to 59 (LTTKLTNTSITDAQ). The chain crosses the membrane as a helical span at residues 60 to 87 (EMETIWTILPAIILILIALPSLRILYLT). At 88 to 227 (DEVNDPSFTI…IFEMGPVLTL (140 aa)) the chain is on the mitochondrial intermembrane side. Cu cation contacts are provided by histidine 161, cysteine 196, glutamate 198, cysteine 200, histidine 204, and methionine 207. Glutamate 198 is a Mg(2+) binding site.

This sequence belongs to the cytochrome c oxidase subunit 2 family. In terms of assembly, component of the cytochrome c oxidase (complex IV, CIV), a multisubunit enzyme composed of 14 subunits. The complex is composed of a catalytic core of 3 subunits MT-CO1, MT-CO2 and MT-CO3, encoded in the mitochondrial DNA, and 11 supernumerary subunits COX4I, COX5A, COX5B, COX6A, COX6B, COX6C, COX7A, COX7B, COX7C, COX8 and NDUFA4, which are encoded in the nuclear genome. The complex exists as a monomer or a dimer and forms supercomplexes (SCs) in the inner mitochondrial membrane with NADH-ubiquinone oxidoreductase (complex I, CI) and ubiquinol-cytochrome c oxidoreductase (cytochrome b-c1 complex, complex III, CIII), resulting in different assemblies (supercomplex SCI(1)III(2)IV(1) and megacomplex MCI(2)III(2)IV(2)). Found in a complex with TMEM177, COA6, COX18, COX20, SCO1 and SCO2. Interacts with TMEM177 in a COX20-dependent manner. Interacts with COX20. Interacts with COX16. It depends on Cu cation as a cofactor.

Its subcellular location is the mitochondrion inner membrane. The catalysed reaction is 4 Fe(II)-[cytochrome c] + O2 + 8 H(+)(in) = 4 Fe(III)-[cytochrome c] + 2 H2O + 4 H(+)(out). Component of the cytochrome c oxidase, the last enzyme in the mitochondrial electron transport chain which drives oxidative phosphorylation. The respiratory chain contains 3 multisubunit complexes succinate dehydrogenase (complex II, CII), ubiquinol-cytochrome c oxidoreductase (cytochrome b-c1 complex, complex III, CIII) and cytochrome c oxidase (complex IV, CIV), that cooperate to transfer electrons derived from NADH and succinate to molecular oxygen, creating an electrochemical gradient over the inner membrane that drives transmembrane transport and the ATP synthase. Cytochrome c oxidase is the component of the respiratory chain that catalyzes the reduction of oxygen to water. Electrons originating from reduced cytochrome c in the intermembrane space (IMS) are transferred via the dinuclear copper A center (CU(A)) of subunit 2 and heme A of subunit 1 to the active site in subunit 1, a binuclear center (BNC) formed by heme A3 and copper B (CU(B)). The BNC reduces molecular oxygen to 2 water molecules using 4 electrons from cytochrome c in the IMS and 4 protons from the mitochondrial matrix. In Macaca mulatta (Rhesus macaque), this protein is Cytochrome c oxidase subunit 2 (MT-CO2).